The following is an 83-amino-acid chain: Small ribosomal subunit protein bS16 (83 aa).

Belongs to the bacterial ribosomal protein bS16 family.

This is Small ribosomal subunit protein bS16 from Finegoldia magna (strain ATCC 29328 / DSM 20472 / WAL 2508) (Peptostreptococcus magnus).